Consider the following 517-residue polypeptide: NAD(P)H-quinone oxidoreductase subunit 2 (517 aa).

Helical transmembrane passes span 16-36, 43-63, 80-100, 110-130, 133-153, 168-188, 211-231, 245-265, 279-299, 307-327, 335-355, 379-399, 401-421, and 467-487; these read ILPE…DLIF, WLPY…YLAW, LSIV…LMSI, LAEF…LCGA, LVMI…MTGY, LLIG…LYGL, LGLA…ISAV, PTPV…ALAI, WHFV…VVAL, MLAY…VAGT, VFYL…IILF, LALS…GFFG, IYLF…LGLV, and VGIV…NPLF.

This sequence belongs to the complex I subunit 2 family. As to quaternary structure, NDH-1 can be composed of about 15 different subunits; different subcomplexes with different compositions have been identified which probably have different functions.

The protein resides in the cellular thylakoid membrane. It catalyses the reaction a plastoquinone + NADH + (n+1) H(+)(in) = a plastoquinol + NAD(+) + n H(+)(out). The enzyme catalyses a plastoquinone + NADPH + (n+1) H(+)(in) = a plastoquinol + NADP(+) + n H(+)(out). Functionally, NDH-1 shuttles electrons from an unknown electron donor, via FMN and iron-sulfur (Fe-S) centers, to quinones in the respiratory and/or the photosynthetic chain. The immediate electron acceptor for the enzyme in this species is believed to be plastoquinone. Couples the redox reaction to proton translocation, and thus conserves the redox energy in a proton gradient. Cyanobacterial NDH-1 also plays a role in inorganic carbon-concentration. The chain is NAD(P)H-quinone oxidoreductase subunit 2 from Rippkaea orientalis (strain PCC 8801 / RF-1) (Cyanothece sp. (strain PCC 8801)).